A 373-amino-acid polypeptide reads, in one-letter code: tRNA (guanine(26)-N(2))-dimethyltransferase (373 aa).

The 364-residue stretch at 2–365 (KIISEGETKL…AELSDLVVLI (364 aa)) folds into the Trm1 methyltransferase domain. Residues Arg-35, Arg-66, Asp-86, Asp-113, and Ala-114 each contribute to the S-adenosyl-L-methionine site.

It belongs to the class I-like SAM-binding methyltransferase superfamily. Trm1 family.

The enzyme catalyses guanosine(26) in tRNA + 2 S-adenosyl-L-methionine = N(2)-dimethylguanosine(26) in tRNA + 2 S-adenosyl-L-homocysteine + 2 H(+). In terms of biological role, dimethylates a single guanine residue at position 26 of a number of tRNAs using S-adenosyl-L-methionine as donor of the methyl groups. In Methanococcus maripaludis (Methanococcus deltae), this protein is tRNA (guanine(26)-N(2))-dimethyltransferase.